Reading from the N-terminus, the 309-residue chain is Tagatose-6-phosphate kinase (309 aa).

This sequence belongs to the carbohydrate kinase PfkB family. LacC subfamily.

It catalyses the reaction D-tagatofuranose 6-phosphate + ATP = D-tagatofuranose 1,6-bisphosphate + ADP + H(+). Its pathway is carbohydrate metabolism; D-tagatose 6-phosphate degradation; D-glyceraldehyde 3-phosphate and glycerone phosphate from D-tagatose 6-phosphate: step 1/2. This Streptococcus pyogenes serotype M4 (strain MGAS10750) protein is Tagatose-6-phosphate kinase.